Reading from the N-terminus, the 982-residue chain is Coatomer subunit beta (982 aa).

HEAT repeat units follow at residues 16 to 53 (SGAP…NGEP), 130 to 167 (ELVE…RFPE), 241 to 278 (YDKG…SPTA), and 317 to 352 (LQDS…NQNS).

In terms of assembly, oligomeric complex that consists of at least the alpha, beta, beta', gamma, delta, epsilon and zeta subunits.

The protein resides in the cytoplasm. Its subcellular location is the golgi apparatus membrane. It is found in the cytoplasmic vesicle. It localises to the COPI-coated vesicle membrane. The coatomer is a cytosolic protein complex that binds to dilysine motifs and reversibly associates with Golgi non-clathrin-coated vesicles, which further mediate biosynthetic protein transport from the ER, via the Golgi up to the trans Golgi network. Coatomer complex is required for budding from Golgi membranes, and is essential for the retrograde Golgi-to-ER transport of dilysine-tagged proteins. The protein is Coatomer subunit beta of Trypanosoma brucei brucei.